A 177-amino-acid polypeptide reads, in one-letter code: Probable chemoreceptor glutamine deamidase CheD (177 aa).

This sequence belongs to the CheD family.

It carries out the reaction L-glutaminyl-[protein] + H2O = L-glutamyl-[protein] + NH4(+). Functionally, probably deamidates glutamine residues to glutamate on methyl-accepting chemotaxis receptors (MCPs), playing an important role in chemotaxis. In Pseudomonas fluorescens (strain SBW25), this protein is Probable chemoreceptor glutamine deamidase CheD.